The primary structure comprises 378 residues: Alkaline elastase YaB (378 aa).

Positions Met-1 to Ala-27 are cleaved as a signal peptide. A propeptide spanning residues Ala-28–Met-110 is cleaved from the precursor. Gln-111 contributes to the Ca(2+) binding site. Residues Pro-114–Thr-377 form the Peptidase S8 domain. Asp-141 (charge relay system) is an active-site residue. Asp-149 is a Ca(2+) binding site. His-171 acts as the Charge relay system in catalysis. Residues Leu-182, Asn-184, Ile-186, Val-188, Ala-272, Tyr-274, and Ala-277 each contribute to the Ca(2+) site. The Charge relay system role is filled by Ser-324.

Belongs to the peptidase S8 family. Ca(2+) is required as a cofactor.

It is found in the secreted. In terms of biological role, digests elastin efficiently, has a substrate preference for Ala in P1 position. The protein is Alkaline elastase YaB (ale) of Bacillus sp. (strain YaB).